The chain runs to 3227 residues: MRITKSPPKNQYSQPPPRVAEFIRQAQNEEVTSDLGLVSLCSEFRKNDWPYPRGDLYSWVPVLNRFDAILERIVEHYSLKDKVQTKPFDSDTLSILLEILSFSAHLLSHCANRSIYNSTVYLEYLLNSSVLEVIDSTLALLLHIVQKATISKRGKQLFSLSQDRLFRFLMFLPQDAMKTGFSQNYETLLFSNEIPQEWCSLELSYYKSSPSKDFSSASQPNSEGFSILKLPYNKVLGKPIEELLVKTLHDNQIPEQYSFDLLVSLMLRQNLYDINRRRLMIRIGLLALSNLVYAHSQAVQTRFLIADPEITTHLANLVSPDVDLPQNFKAVCFECFKAFFFKKSMIPSVLASLNVSVSYGLMMNLVRDFSKNLENPNFYYEREYVDSFYDFLQFMTSSPLGGNMACSAGLTSLLGYHLSVKTPQATYVVARSIVMLDHLIDGYSMAFPDFSESKGLDMLVDRVQYELEAGLQDIKSGKGNPEIVLNMDYAISYDRYFLLKNLLKFVLHLIQSGGSVVELRNLIDSSLISSLAFLLEHHEVYGSNLFASTTNIMSTFIHNEPTCYGIIHEKKLSHAFLDAVNRKILNSSDAITSIPLAFGAICLNSQGFDLFLEKNPIPQLFSIFTSLNHCKSLISSDNAAILGTYIDELMRHQPSLKDPIVKMIFKACDQVSALLDNFNPFQYINAKEYPYLLYLETFSSFLENIITNEGHARYLISKGIVSHVLNLIQHPVLAFGFIDSSAFNSFFVLLHHAVDFDAPEVFRPLLDCIITRCEEGITEFTIVSLKQATISLIKDSNMGHEDANNFLHFSIVGNLLTIFAELFSSHAALKKAGNLPLVQLFISPSRYAGIFDILCNIKSIATSLDIHICLGVSDDFVLCSDSLTTIVTDKDEKEKFETKKKELTQDSSFCKFQNIRSNFSQIAYGVSKFFTSLTRALGNTSVQDFNEYKMIHKLGSNIALVVDELINLSSKQITSHPQSLSIASLEASLIFVLGASSIIREDDSKVTLVLLISRLLGGCRTMDVLISLNETVSGFFRLSDRDPLSKSNRVLLALSSTLLNLILVFTSADFMSETSKTLNMALKSEFDMTDFNNSGSKLMHVLHARIFISVLHLWRSADDLHLPYITRALLTNVLSNCYQFEDGIKNVVDSINNLRTSIANGDIKEPLDVVTDDNTNSNFSLEETNASVTDMPESEKHENGIFQAYLLKEMPNDIVSQFEMLKSKQIELTVQMASYEGDLNQNLCDFLYTRDDVQMNADVQFSVTSGLIVEIKKLAQSTDCKAKNQLGPAVGLLSLFISHDFTQNKAKNCVLSELNFFLELLHSLNNGLPSDSHKTSIVCILYLLEVLLADSKKPDEFEFNSEDCSLKLTDGAITVDLASQKHIMSSVITLLSLNSANLGVVVSAFRVVVLLTSASEMIHTFVKLSGLPSLFKAMRACSGFCNESLHIPFISILRRLLEFDEVVELMMFDDLVNIFKLQGRARKTELHGFIRANAEMVLRSPECFIKILKDCCVLGHFTPESEHYYLELKESLPGVLQNGQTDLDPSKEQMSSVIVSFLLDELMDLTETRQFSDRSPNSEFTPENDSLYMYNVFLLQCLTELLSGYNACKRCFLNFQPRRKAPFFNLSRKYNSYLVGFFLEKLLPFGCIRLSENNEVRKAFSVSNWAISILVFLCAYSNEQQTQAVDEIRREVLTSVLKFYKSSSSFSENLEAYYCKLLVLAELCYRLCDAQTVSQKAPNHLLRRSQDQNVKTMIDLGYIPTLTNAISEIDMNYPVSRKVVRHILKPLQLLTKEAIFLSQTNPEALSGAAQDSMGDQSLSSSSEESSDSDREEPPDLYRNSVLGIFQGDIVNENDENYEDSEDDGVYEEMEFEDDQSGSADSVVSEDDADDVMYSDNDDMNIEFMVDEQDASSQNDDSSFDEASSHGDVISIDEEDLDNQGEEFEWEDEDNASSGYEDELDYNEDEVGENDSTTFEAMENAFTETSDNDDHLEEADHVSPVEIDFLENDENSSSEQDDEFQWEWNTETPSGADILSRHGALLRDLFPLPGLSRRVMIINSNDPSRSRPFLNNNASEGLLKHPLLLRNNLIHTPKATELWENLAEIDNHTASGAAFQRLLYYLALEIPNEDSSVLGWTSLKVSKHTDPLRATSDFIPLFSMQRWNSITSMFFAHASGSIALRITGSVLFALVPPALEKYNLENQKKEILENESKEEETRQPEVNIQPEEPINTSDMEGVTTEANEIGSYQEPSLINIRGREVDVSSLGIDPTFLLALPEEMREEVVFQHIQERHMESISDSSRRIDPSFLEVLPSDLRDELLFQEAVQMRLFDHATRNNNSVDHEVEMEEIDQGGTVSEHREKSVKPVKKIPVPNLLDRQGLYSLIRLIFISQHNGKNPYYDLIVNISENKQHRADIVGLLLYILQEASINDRASEKCYRDLTVKSLNNSQQKEVKKSTGLLESLCKVPVVNGISAPALILQQGIDLLSHLATWADHFASFFLSMHDFSGIASKKSAGRKNRESNVYKIAPINVLLGLLAREELFGNTLVMNTFSELLSTLTKPLLSFYKSEKLQKDSATTGYTNDQDSRGSTVPKQDPGTTASRKDKKILSPPNILDENLRLAASLITTDSCSSRTFQNALSVMFHLSSIPKAKILIGKELLRHGQEYGNSITNDLSRLCADVKSGKNESELQVALAPFCPASSNQAKLLRCLKALDYIFERRPKGQEQSPGNIIQLLEFYDNLKFSSLWEVLSECLSALRDHTSITHVSTVLLPLIESLMVICRLVFIELPEDVGKHISPILERFKTLFISFTEEHRKIINMMVFTTPSLMSGSFSLLVKNPKVLEFENKRNYFNRQLHEEAAKEQYPPLNITVRRDHVFLDSYRALHFKDADEVKFSKLNIHFRDEEGVDAGGVTREWLQVLARQMFNPDYALFLPVTGDATTFHPNRDSSVNPDHLSFFKFTGRIIGKALYDGRLLDCHFSRAVYKHMLHRSVSVKDIESLDPDYYKSLVWMLNNDITDIITEEFAVEKDVFGEKTVVDLIPNGRNIPVTELNKQNYVNRMVDYKLRESVKDQLKSLLDGFSDIIPSHLIQIFNEQELELLISGLPEIDIDDWKNNTEYHGYNVSSPQVQWFWRAVRSFDEEERAKLLQFATGTSKVPLNGFKELEGMSGFQRFNIHKSYGSLNRLPQSHTCFNQLDLPEYDTYEQLRSMLLTAINEGSEGFGFA.

Disordered stretches follow at residues S1806–L1836, M1869–S1894, Q1908–I1929, and A2577–K2607. Residues D1811–E1823 show a composition bias toward low complexity. Residues V1883 to S1894 show a composition bias toward acidic residues. Residues A2577–A2601 are compositionally biased toward polar residues. An HECT domain is found at D2891–A3227. C3194 serves as the catalytic Glycyl thioester intermediate.

The protein belongs to the UPL family. TOM1/PTR1 subfamily.

It is found in the nucleus. The catalysed reaction is S-ubiquitinyl-[E2 ubiquitin-conjugating enzyme]-L-cysteine + [acceptor protein]-L-lysine = [E2 ubiquitin-conjugating enzyme]-L-cysteine + N(6)-ubiquitinyl-[acceptor protein]-L-lysine.. The protein operates within protein modification; protein ubiquitination. Functionally, probable ubiquitin ligase protein involved in mRNA export. E3 ubiquitin ligase proteins mediate ubiquitination and subsequent proteasomal degradation of target proteins. Probably participates in mRNA export from the nucleus by regulating the transport of hnRNP proteins such as rae1. The chain is E3 ubiquitin-protein ligase ptr1 (ptr1) from Schizosaccharomyces pombe (strain 972 / ATCC 24843) (Fission yeast).